The primary structure comprises 904 residues: Protein translocase subunit SecA (904 aa).

Residues Q89, 107–111 (GEGKT), and D502 contribute to the ATP site. Zn(2+)-binding residues include C888, C890, C899, and H900.

Belongs to the SecA family. As to quaternary structure, monomer and homodimer. Part of the essential Sec protein translocation apparatus which comprises SecA, SecYEG and auxiliary proteins SecDF-YajC and YidC. Requires Zn(2+) as cofactor.

The protein localises to the cell inner membrane. It localises to the cytoplasm. It carries out the reaction ATP + H2O + cellular proteinSide 1 = ADP + phosphate + cellular proteinSide 2.. Its function is as follows. Part of the Sec protein translocase complex. Interacts with the SecYEG preprotein conducting channel. Has a central role in coupling the hydrolysis of ATP to the transfer of proteins into and across the cell membrane, serving both as a receptor for the preprotein-SecB complex and as an ATP-driven molecular motor driving the stepwise translocation of polypeptide chains across the membrane. The protein is Protein translocase subunit SecA of Roseobacter denitrificans (strain ATCC 33942 / OCh 114) (Erythrobacter sp. (strain OCh 114)).